The sequence spans 476 residues: Dihydrolipoyl dehydrogenase (476 aa).

FAD-binding positions include 36–45 (EHQERLGGVC), lysine 54, and alanine 117. Cysteine 45 and cysteine 50 form a disulfide bridge. NAD(+) is bound by residues 182-186 (GGGII), aspartate 205, valine 238, and 271-274 (AIGR). FAD is bound by residues aspartate 314 and alanine 322. Histidine 446 serves as the catalytic Proton acceptor.

This sequence belongs to the class-I pyridine nucleotide-disulfide oxidoreductase family. In terms of assembly, homodimer. The cofactor is FAD.

It is found in the cytoplasm. The catalysed reaction is N(6)-[(R)-dihydrolipoyl]-L-lysyl-[protein] + NAD(+) = N(6)-[(R)-lipoyl]-L-lysyl-[protein] + NADH + H(+). Lipoamide dehydrogenase is a component of the alpha-ketoacid dehydrogenase complexes. The polypeptide is Dihydrolipoyl dehydrogenase (lpdA) (Buchnera aphidicola subsp. Schizaphis graminum (strain Sg)).